The chain runs to 293 residues: Ribosomal protein L11 methyltransferase (293 aa).

S-adenosyl-L-methionine is bound by residues Thr145, Gly166, Asp188, and Asn230.

Belongs to the methyltransferase superfamily. PrmA family.

It localises to the cytoplasm. The catalysed reaction is L-lysyl-[protein] + 3 S-adenosyl-L-methionine = N(6),N(6),N(6)-trimethyl-L-lysyl-[protein] + 3 S-adenosyl-L-homocysteine + 3 H(+). In terms of biological role, methylates ribosomal protein L11. This Escherichia coli (strain SMS-3-5 / SECEC) protein is Ribosomal protein L11 methyltransferase.